The sequence spans 408 residues: Acetylornithine aminotransferase (408 aa).

Residues 107-108 (GT) and F141 contribute to the pyridoxal 5'-phosphate site. R144 is a binding site for N(2)-acetyl-L-ornithine. 227 to 230 (DEIQ) is a pyridoxal 5'-phosphate binding site. K256 carries the post-translational modification N6-(pyridoxal phosphate)lysine. A N(2)-acetyl-L-ornithine-binding site is contributed by T284. Residue T285 coordinates pyridoxal 5'-phosphate.

The protein belongs to the class-III pyridoxal-phosphate-dependent aminotransferase family. ArgD subfamily. In terms of assembly, homodimer. Pyridoxal 5'-phosphate is required as a cofactor.

The protein localises to the cytoplasm. The enzyme catalyses N(2)-acetyl-L-ornithine + 2-oxoglutarate = N-acetyl-L-glutamate 5-semialdehyde + L-glutamate. It participates in amino-acid biosynthesis; L-arginine biosynthesis; N(2)-acetyl-L-ornithine from L-glutamate: step 4/4. This Xanthomonas axonopodis pv. citri (strain 306) protein is Acetylornithine aminotransferase.